A 94-amino-acid chain; its full sequence is Large ribosomal subunit protein bL28 (94 aa).

It belongs to the bacterial ribosomal protein bL28 family.

The chain is Large ribosomal subunit protein bL28 from Maricaulis maris (strain MCS10) (Caulobacter maris).